A 683-amino-acid chain; its full sequence is E3 ubiquitin-protein ligase WAVH1 (683 aa).

The RING-type; atypical zinc-finger motif lies at 130–176; that stretch reads CGICLQSVKSGQGTAIFTAECSHTFHFPCVTSRAAANHNRLASCPVC. Residues 302–438 form the VWFA domain; it reads DLVAVLDVSG…AHSRIPIHTI (137 aa).

In terms of tissue distribution, expressed in root tips and leaf primordia.

The enzyme catalyses S-ubiquitinyl-[E2 ubiquitin-conjugating enzyme]-L-cysteine + [acceptor protein]-L-lysine = [E2 ubiquitin-conjugating enzyme]-L-cysteine + N(6)-ubiquitinyl-[acceptor protein]-L-lysine.. Its function is as follows. E3 ubiquitin-protein ligase involved in the regulation of root growth. Acts as a positive regulator of root gravitropism. Possesses E3 protein ligase activity in vitro. The sequence is that of E3 ubiquitin-protein ligase WAVH1 from Arabidopsis thaliana (Mouse-ear cress).